Reading from the N-terminus, the 97-residue chain is Mapk-regulated corepressor-interacting protein 1 (97 aa).

Disordered stretches follow at residues 1-29 (MTSS…NEIF) and 72-97 (SNSL…PKKS). Residues 17–28 (ASNTRSPSSNEI) are compositionally biased toward polar residues. The span at 82-97 (DLNDLKRRTVQDPKKS) shows a compositional bias: basic and acidic residues.

This sequence belongs to the MCRIP family.

The protein localises to the nucleus. The protein resides in the cytoplasm. Its subcellular location is the stress granule. Functionally, may play a role in the regulation of the epithelial-mesenchymal transition. The sequence is that of Mapk-regulated corepressor-interacting protein 1 (Mcrip1) from Xenopus tropicalis (Western clawed frog).